Consider the following 212-residue polypeptide: Thymidylate kinase (212 aa).

Gly-11–Thr-18 is a binding site for ATP.

Belongs to the thymidylate kinase family.

It carries out the reaction dTMP + ATP = dTDP + ADP. In terms of biological role, phosphorylation of dTMP to form dTDP in both de novo and salvage pathways of dTTP synthesis. In Streptococcus pneumoniae (strain Hungary19A-6), this protein is Thymidylate kinase.